A 239-amino-acid polypeptide reads, in one-letter code: Probable transcriptional regulatory protein BT9727_0453 (239 aa).

This sequence belongs to the TACO1 family. YeeN subfamily.

Its subcellular location is the cytoplasm. This is Probable transcriptional regulatory protein BT9727_0453 from Bacillus thuringiensis subsp. konkukian (strain 97-27).